Consider the following 590-residue polypeptide: Acetylcholinesterase (590 aa).

The signal sequence occupies residues 1 to 24 (MREMNLLVTSSLGVLLHLVVLCQA). Asn83 carries N-linked (GlcNAc...) asparagine glycosylation. A disulfide bridge connects residues Cys91 and Cys118. Ser224 acts as the Acyl-ester intermediate in catalysis. Cysteines 278 and 289 form a disulfide. Glu351 functions as the Charge relay system in the catalytic mechanism. Cys426 and Cys545 are oxidised to a cystine. N-linked (GlcNAc...) asparagine glycosylation occurs at Asn440. His464 (charge relay system) is an active-site residue. N-linked (GlcNAc...) asparagine glycans are attached at residues Asn481 and Asn557. Ser567 is lipidated: GPI-anchor amidated serine. Positions 568–590 (SGTSSSKGIIFYVLFSILYLIFY) are cleaved as a propeptide — removed in mature form.

This sequence belongs to the type-B carboxylesterase/lipase family. As to quaternary structure, isoform H form is a homodimer; the asymmetric form is a disulfide-bonded oligomer composed of a collagenic subunit (Q) and a variable number of T catalytic subunits. Post-translationally, an interchain disulfide bond is present in what becomes position 596 of the T isoform. As to expression, found in the synapses and to a lower extent in extrajunctional areas of muscle and nerve, and on erythrocyte membranes.

It localises to the cell membrane. The protein localises to the synapse. The enzyme catalyses acetylcholine + H2O = choline + acetate + H(+). Its function is as follows. Terminates signal transduction at the neuromuscular junction by rapid hydrolysis of the acetylcholine released into the synaptic cleft. May be involved in cell-cell interactions. This chain is Acetylcholinesterase (ache), found in Torpedo marmorata (Marbled electric ray).